Consider the following 164-residue polypeptide: Large ribosomal subunit protein bL9 (164 aa).

It belongs to the bacterial ribosomal protein bL9 family.

Functionally, binds to the 23S rRNA. In Borrelia duttonii (strain Ly), this protein is Large ribosomal subunit protein bL9.